We begin with the raw amino-acid sequence, 441 residues long: Arginine biosynthesis bifunctional protein ArgJ, mitochondrial (441 aa).

The transit peptide at 1–8 (MRISSTLL) directs the protein to the mitochondrion. Substrate is bound by residues threonine 177, lysine 204, threonine 215, glutamate 301, asparagine 436, and serine 441. Threonine 215 acts as the Nucleophile in catalysis.

The protein belongs to the ArgJ family. In terms of assembly, heterodimer of an alpha and a beta chain. Post-translationally, the alpha and beta chains are autoproteolytically processed from a single precursor protein within the mitochondrion.

It localises to the mitochondrion matrix. The catalysed reaction is N(2)-acetyl-L-ornithine + L-glutamate = N-acetyl-L-glutamate + L-ornithine. It catalyses the reaction L-glutamate + acetyl-CoA = N-acetyl-L-glutamate + CoA + H(+). It participates in amino-acid biosynthesis; L-arginine biosynthesis; L-ornithine and N-acetyl-L-glutamate from L-glutamate and N(2)-acetyl-L-ornithine (cyclic): step 1/1. It functions in the pathway amino-acid biosynthesis; L-arginine biosynthesis; N(2)-acetyl-L-ornithine from L-glutamate: step 1/4. Its function is as follows. Catalyzes two activities which are involved in the cyclic version of arginine biosynthesis: the synthesis of acetylglutamate from glutamate and acetyl-CoA, and of ornithine by transacetylation between acetylornithine and glutamate. The sequence is that of Arginine biosynthesis bifunctional protein ArgJ, mitochondrial from Saccharomyces cerevisiae (strain Lalvin EC1118 / Prise de mousse) (Baker's yeast).